We begin with the raw amino-acid sequence, 296 residues long: Nucleotide-binding protein SPT_1506 (296 aa).

Residue 13–20 (GMSGAGKT) participates in ATP binding. 63–66 (DMRS) contacts GTP.

It belongs to the RapZ-like family.

Its function is as follows. Displays ATPase and GTPase activities. This is Nucleotide-binding protein SPT_1506 from Streptococcus pneumoniae (strain Taiwan19F-14).